Here is a 328-residue protein sequence, read N- to C-terminus: Cytochrome c biogenesis protein CcsA (328 aa).

The next 8 membrane-spanning stretches (helical) occupy residues 15 to 35 (FLVL…PSVP), 37 to 57 (LQAL…ALLG), 68 to 88 (ISNL…AHLI), 97 to 117 (LVGV…ALTL), 142 to 162 (VMML…AFLF), 236 to 256 (IIGL…VWAN), 271 to 291 (WALI…TKGW), and 297 to 317 (AILA…VNLL).

The protein belongs to the CcmF/CycK/Ccl1/NrfE/CcsA family. In terms of assembly, may interact with ccs1.

It localises to the cellular thylakoid membrane. Functionally, required during biogenesis of c-type cytochromes (cytochrome c6 and cytochrome f) at the step of heme attachment. This chain is Cytochrome c biogenesis protein CcsA, found in Gloeothece citriformis (strain PCC 7424) (Cyanothece sp. (strain PCC 7424)).